We begin with the raw amino-acid sequence, 94 residues long: Alpha-conotoxin-like Cp20.2 (94 aa).

The N-terminal stretch at 1 to 24 is a signal peptide; it reads MPKLAVVLLVLLILPLSYFDAAGG. Positions 25–45 are excised as a propeptide; that stretch reads QAVQWDRRGNGLARYLQRGDR. Cystine bridges form between C63–C72, C68–C80, C73–C90, and C78–C92.

This sequence belongs to the conotoxin D superfamily. As to quaternary structure, hetero-, homo- or pseudo-homodimer (identical sequence, different post-translational modifications). In terms of tissue distribution, expressed by the venom duct.

The protein resides in the secreted. Its function is as follows. Alpha-conotoxins act on postsynaptic membranes, they bind to the nicotinic acetylcholine receptors (nAChR) and thus inhibit them. Through its two C-terminal domains, this homodimeric protein would bind to two nAChR allosteric sites, located outside the nAChR C-loop of the principal binding face and at the adjacent binding interface in a clockwise direction. This toxin specifically blocks mammalian neuronal nAChR of the alpha-7/CHRNA7, alpha-3-beta-2/CHRNA3-CHRNB2 and alpha-4-beta-2/CHRNA4-CHRNB2 subtypes. The polypeptide is Alpha-conotoxin-like Cp20.2 (Conus capitaneus (Captain cone)).